The sequence spans 51 residues: uncharacterized protein (51 aa).

This is an uncharacterized protein from Dictyostelium discoideum (Social amoeba).